The following is a 246-amino-acid chain: Lipoprotein-releasing system ATP-binding protein LolD 1 (246 aa).

Residues 6 to 244 enclose the ABC transporter domain; that stretch reads LKLERIRKDL…ASVTNEAASL (239 aa). Position 43 to 50 (43 to 50) interacts with ATP; it reads GPSGSGKS.

Belongs to the ABC transporter superfamily. Lipoprotein translocase (TC 3.A.1.125) family. The complex is composed of two ATP-binding proteins (LolD) and two transmembrane proteins (LolC and LolE).

The protein localises to the cell inner membrane. In terms of biological role, part of the ABC transporter complex LolCDE involved in the translocation of mature outer membrane-directed lipoproteins, from the inner membrane to the periplasmic chaperone, LolA. Responsible for the formation of the LolA-lipoprotein complex in an ATP-dependent manner. The polypeptide is Lipoprotein-releasing system ATP-binding protein LolD 1 (Chlorobium chlorochromatii (strain CaD3)).